A 335-amino-acid chain; its full sequence is Rho guanine nucleotide exchange factor 39 (335 aa).

In terms of domain architecture, DH spans 22–197; sequence KRACTARELL…SETAQRVHTI (176 aa). The 105-residue stretch at 227–331 folds into the PH domain; sequence WFLRQGWLLV…WYHSLTLAIS (105 aa).

It localises to the cell membrane. In terms of biological role, promotes cell proliferation. This chain is Rho guanine nucleotide exchange factor 39 (ARHGEF39), found in Bos taurus (Bovine).